Consider the following 129-residue polypeptide: Putative membrane protein insertion efficiency factor (129 aa).

It belongs to the UPF0161 family.

It is found in the cell inner membrane. Functionally, could be involved in insertion of integral membrane proteins into the membrane. This Rhodopseudomonas palustris (strain TIE-1) protein is Putative membrane protein insertion efficiency factor.